We begin with the raw amino-acid sequence, 323 residues long: Aspartate carbamoyltransferase catalytic subunit (323 aa).

The carbamoyl phosphate site is built by Arg-71 and Thr-72. Lys-99 contributes to the L-aspartate binding site. 3 residues coordinate carbamoyl phosphate: Arg-121, His-151, and Gln-154. Residues Arg-184 and Arg-239 each contribute to the L-aspartate site. Residues Gly-280 and Pro-281 each contribute to the carbamoyl phosphate site.

It belongs to the aspartate/ornithine carbamoyltransferase superfamily. ATCase family. As to quaternary structure, heterododecamer (2C3:3R2) of six catalytic PyrB chains organized as two trimers (C3), and six regulatory PyrI chains organized as three dimers (R2).

The enzyme catalyses carbamoyl phosphate + L-aspartate = N-carbamoyl-L-aspartate + phosphate + H(+). The protein operates within pyrimidine metabolism; UMP biosynthesis via de novo pathway; (S)-dihydroorotate from bicarbonate: step 2/3. Its function is as follows. Catalyzes the condensation of carbamoyl phosphate and aspartate to form carbamoyl aspartate and inorganic phosphate, the committed step in the de novo pyrimidine nucleotide biosynthesis pathway. The protein is Aspartate carbamoyltransferase catalytic subunit of Cupriavidus taiwanensis (strain DSM 17343 / BCRC 17206 / CCUG 44338 / CIP 107171 / LMG 19424 / R1) (Ralstonia taiwanensis (strain LMG 19424)).